The sequence spans 161 residues: Transcriptional repressor NrdR (161 aa).

Residues 1 to 11 (MQCPHCQHHNS) show a composition bias toward basic residues. A disordered region spans residues 1–21 (MQCPHCQHHNSRVLESRSSEG). A zinc finger lies at 3 to 34 (CPHCQHHNSRVLESRSSEGGQSIRRRRECLEC). Positions 49–139 (VTVIKQDGER…VYGRFQGIAD (91 aa)) constitute an ATP-cone domain.

This sequence belongs to the NrdR family. It depends on Zn(2+) as a cofactor.

Its function is as follows. Negatively regulates transcription of bacterial ribonucleotide reductase nrd genes and operons by binding to NrdR-boxes. This is Transcriptional repressor NrdR from Synechocystis sp. (strain ATCC 27184 / PCC 6803 / Kazusa).